The chain runs to 318 residues: tRNA-cytidine(32) 2-sulfurtransferase (318 aa).

A PP-loop motif motif is present at residues 52 to 57; that stretch reads SGGKDS. [4Fe-4S] cluster contacts are provided by C127, C130, and C218.

It belongs to the TtcA family. As to quaternary structure, homodimer. Mg(2+) is required as a cofactor. It depends on [4Fe-4S] cluster as a cofactor.

The protein resides in the cytoplasm. It carries out the reaction cytidine(32) in tRNA + S-sulfanyl-L-cysteinyl-[cysteine desulfurase] + AH2 + ATP = 2-thiocytidine(32) in tRNA + L-cysteinyl-[cysteine desulfurase] + A + AMP + diphosphate + H(+). Its pathway is tRNA modification. Its function is as follows. Catalyzes the ATP-dependent 2-thiolation of cytidine in position 32 of tRNA, to form 2-thiocytidine (s(2)C32). The sulfur atoms are provided by the cysteine/cysteine desulfurase (IscS) system. The polypeptide is tRNA-cytidine(32) 2-sulfurtransferase (Actinobacillus pleuropneumoniae serotype 3 (strain JL03)).